Reading from the N-terminus, the 615-residue chain is Crinkler effector protein 15 (615 aa).

Residues 1-17 form the signal peptide; the sequence is MVKLVCAIVGVAGSAFP. Residues 18–54 are LQLFLAK domain; it reads VDIDASQLVGDLKKAIKAENAMTFTGDAKDLQLFLAK. Positions 55–136 are DWL domain; sequence QPVDDESGKE…NMELPSSEQI (82 aa). Positions 137-143 match the HVLVXXP motif motif; sequence HVLVVVP. The N-linked (GlcNAc...) asparagine glycan is linked to Asn-531.

It belongs to the Crinkler effector family.

Its subcellular location is the secreted. It localises to the host nucleus. Functionally, secreted effector that elicits necrosis in host plants, a characteristic of plant innate immunity. The sequence is that of Crinkler effector protein 15 from Phytophthora infestans (Potato late blight agent).